The sequence spans 144 residues: Probable copper-binding protein PcoE (144 aa).

The signal sequence occupies residues 1-20; sequence MKKILVSFVAIMAVASSAMA. Residues 86-144 are disordered; sequence MHKKMMKSKPAASNETAKSFSEMNEHEKSAVVHEKANNGQSSVIHQQQAEKHRSQITQN. Positions 96–107 are enriched in polar residues; sequence AASNETAKSFSE. The span at 108–121 shows a compositional bias: basic and acidic residues; it reads MNEHEKSAVVHEKA. Polar residues predominate over residues 122–132; the sequence is NNGQSSVIHQQ.

To S.typhimurium SilE.

The protein localises to the periplasm. Required for the copper-inducible expression of copper resistance. Activated by the two-component regulatory system CusS/CusR. This chain is Probable copper-binding protein PcoE (pcoE), found in Escherichia coli.